The following is a 274-amino-acid chain: NAD-dependent protein deacetylase (274 aa).

Residues 1-274 (MDSRMSDLQA…CDEVLAEVVP (274 aa)) form the Deacetylase sirtuin-type domain. NAD(+) is bound by residues 26–46 (GAGCSTASGIPDYRDGQGQWK) and 104–107 (QNVD). The active-site Proton acceptor is the histidine 122. Residues cysteine 130, cysteine 133, cysteine 181, and cysteine 184 each contribute to the Zn(2+) site. NAD(+)-binding positions include 221–223 (GSS), 247–249 (NLG), and cysteine 265.

It belongs to the sirtuin family. Class II subfamily. The cofactor is Zn(2+).

It is found in the cytoplasm. It catalyses the reaction N(6)-acetyl-L-lysyl-[protein] + NAD(+) + H2O = 2''-O-acetyl-ADP-D-ribose + nicotinamide + L-lysyl-[protein]. Its function is as follows. NAD-dependent protein deacetylase which modulates the activities of several enzymes which are inactive in their acetylated form. This chain is NAD-dependent protein deacetylase, found in Bordetella pertussis (strain Tohama I / ATCC BAA-589 / NCTC 13251).